The following is a 219-amino-acid chain: Probable GTP-binding protein EngB (219 aa).

Residues 26–200 form the EngB-type G domain; sequence EGVEIAFAGR…RAKLDTWFAP (175 aa). GTP contacts are provided by residues 34–41, 61–65, 79–82, 146–149, and 179–181; these read GRSNAGKS, GRTQL, DLPG, TKAD, and FSS. Residues S41 and T63 each contribute to the Mg(2+) site.

This sequence belongs to the TRAFAC class TrmE-Era-EngA-EngB-Septin-like GTPase superfamily. EngB GTPase family. Mg(2+) is required as a cofactor.

Functionally, necessary for normal cell division and for the maintenance of normal septation. This chain is Probable GTP-binding protein EngB, found in Vibrio parahaemolyticus serotype O3:K6 (strain RIMD 2210633).